The chain runs to 321 residues: Thymidylate synthase (321 aa).

Residues 1 to 32 (MVLTPTKDGPDQESMPLPADNGESPSKQQAPV) are disordered. Ser-24 and Ser-26 each carry phosphoserine. Tyr-39 carries the post-translational modification Phosphotyrosine. Residues Arg-56 and 181-182 (RR) contribute to the dUMP site. Cys-201 acts as the Nucleophile in catalysis. Tyr-208 carries the phosphotyrosine modification. At Ser-210 the chain carries Phosphoserine. DUMP contacts are provided by residues 223 to 226 (RSAD), Asn-234, and 264 to 266 (HVY). Residue Asp-226 participates in (6R)-5,10-methylene-5,6,7,8-tetrahydrofolate binding. (6R)-5,10-methylene-5,6,7,8-tetrahydrofolate is bound at residue Ala-320.

The protein belongs to the thymidylate synthase family. As to quaternary structure, homodimer.

It catalyses the reaction dUMP + (6R)-5,10-methylene-5,6,7,8-tetrahydrofolate = 7,8-dihydrofolate + dTMP. It functions in the pathway pyrimidine metabolism; dTTP biosynthesis. This is Thymidylate synthase (Ts) from Drosophila melanogaster (Fruit fly).